We begin with the raw amino-acid sequence, 324 residues long: mRNA decay activator protein ZFP36 (324 aa).

The interval methionine 1–proline 15 is necessary for nuclear export. Positions methionine 1–threonine 98 are necessary and sufficient for the association with mRNA decay enzymes and mRNA decay activation. Necessary for localization of ARE-containing mRNAs to processing bodies (PBs) regions lie at residues methionine 1–alanine 172 and threonine 98–glutamate 324. The segment covering proline 15 to proline 46 has biased composition (low complexity). Positions proline 15–alanine 50 are disordered. A Phosphoserine; by MAPKAPK2 modification is found at serine 58. Phosphoserine is present on serine 64. Residues proline 69–glycine 73 form a P-P-P-P-G repeat. Positions proline 76–serine 100 are disordered. A phosphoserine mark is found at serine 86 and serine 88. Threonine 90 is modified (phosphothreonine). Serine 91 is subject to Phosphoserine. Positions threonine 93–proline 166 are necessary for nuclear localization. The necessary for RNA-binding stretch occupies residues threonine 95 to alanine 171. 2 consecutive C3H1-type zinc fingers follow at residues arginine 101 to glycine 129 and lysine 139 to serine 167. The segment at arginine 101–arginine 192 is necessary for interaction with PABPN1. Serine 167 is subject to Phosphoserine. The tract at residues alanine 172–glutamate 324 is necessary for mRNA decay activation. Serine 184 carries the phosphoserine; by MAPKAPK2 modification. 2 disordered regions span residues phenylalanine 185–serine 227 and proline 270–glutamate 324. Serine 195 bears the Phosphoserine mark. The P-P-P-P-G repeat unit spans residues proline 196–serine 200. The segment covering proline 204–serine 214 has biased composition (low complexity). Serine 216 is subject to Phosphoserine. A P-P-P-P-G repeat occupies proline 218–glycine 222. Serine 227 is modified (phosphoserine; by MAPK1; in vitro). A phosphoserine mark is found at serine 274, serine 294, and serine 321. An interaction with CNOT1 region spans residues alanine 310–glutamate 324.

As to quaternary structure, associates with cytoplasmic CCR4-NOT and PAN2-PAN3 deadenylase complexes to trigger ARE-containing mRNA deadenylation and decay processes. Part of a mRNA decay activation complex at least composed of poly(A)-specific exoribonucleases CNOT6, EXOSC2 and XRN1 and mRNA-decapping enzymes DCP1A and DCP2. Associates with the RNA exosome complex. Interacts (via phosphorylated form) with 14-3-3 proteins; these interactions promote exclusion of ZFP36 from cytoplasmic stress granules in response to arsenite treatment in a MAPKAPK2-dependent manner and does not prevent CCR4-NOT deadenylase complex recruitment or ZFP36-induced ARE-containing mRNA deadenylation and decay processes. Interacts with 14-3-3 proteins; these interactions occur in response to rapamycin in an Akt-dependent manner. Interacts with AGO2 and AGO4. Interacts (via C-terminus) with CNOT1; this interaction occurs in a RNA-independent manner and induces mRNA deadenylation. Interacts (via N-terminus) with CNOT6. Interacts with CNOT6L. Interacts (via C-terminus) with CNOT7; this interaction occurs in a RNA-independent manner, induces mRNA deadenylation and is inhibited in a phosphorylation MAPKAPK2-dependent manner. Interacts (via unphosphorylated form) with CNOT8; this interaction occurs in a RNA-independent manner and is inhibited in a phosphorylation MAPKAPK2-dependent manner. Interacts with DCP1A. Interacts (via N-terminus) with DCP2. Interacts with EDC3. Interacts (via N-terminus) with EXOSC2. Interacts with heat shock 70 kDa proteins. Interacts with KHSRP; this interaction increases upon cytokine-induced treatment. Interacts with MAP3K4; this interaction enhances the association with SH3KBP1/CIN85. Interacts with MAPKAPK2; this interaction occurs upon skeletal muscle satellite cell activation. Interacts with NCL. Interacts with NUP214; this interaction increases upon lipopolysaccharide (LPS) stimulation. Interacts with PABPC1; this interaction occurs in a RNA-dependent manner. Interacts (via hypophosphorylated form) with PABPN1 (via RRM domain and C-terminal arginine-rich region); this interaction occurs in the nucleus in a RNA-independent manner, decreases in presence of single-stranded poly(A) RNA-oligomer and in a p38 MAPK-dependent-manner and inhibits nuclear poly(A) tail synthesis. Interacts with PAN2. Interacts (via C3H1-type zinc finger domains) with PKM. Interacts (via C3H1-type zinc finger domains) with nuclear RNA poly(A) polymerase. Interacts with PPP2CA; this interaction occurs in LPS-stimulated cells and induces ZFP36 dephosphorylation, and hence may promote ARE-containing mRNAs decay. Interacts (via C-terminus) with PRR5L (via C-terminus); this interaction may accelerate ZFP36-mediated mRNA decay during stress. Interacts (via C-terminus) with SFN; this interaction occurs in a phosphorylation-dependent manner. Interacts (via extreme C-terminal region) with SH3KBP1/CIN85 (via SH3 domains); this interaction enhances MAP3K4-induced phosphorylation of ZFP36 at Ser-64 and Ser-91 and does not alter neither ZFP36 binding to ARE-containing transcripts nor TNF-alpha mRNA decay. Interacts with XRN1. Interacts (via C-terminus and Ser-184 phosphorylated form) with YWHAB; this interaction occurs in a p38/MAPKAPK2-dependent manner, increases cytoplasmic localization of ZFP36 and protects ZFP36 from Ser-184 dephosphorylation by serine/threonine phosphatase 2A, and hence may be crucial for stabilizing ARE-containing mRNAs. Interacts (via phosphorylated form) with YWHAE. Interacts (via C-terminus) with YWHAG; this interaction occurs in a phosphorylation-dependent manner. Interacts with YWHAH; this interaction occurs in a phosphorylation-dependent manner. Interacts with YWHAQ; this interaction occurs in a phosphorylation-dependent manner. Interacts with (via C-terminus) YWHAZ; this interaction occurs in a phosphorylation-dependent manner. Does not interact with SH3KBP1. Interacts (via P-P-P-P-G repeats) with GIGYF2; the interaction is direct. Phosphorylated. Phosphorylation at serine and/or threonine residues occurs in a p38 MAPK- and MAPKAPK2-dependent manner. Phosphorylated by MAPKAPK2 at Ser-58 and Ser-184; phosphorylation increases its stability and cytoplasmic localization, promotes binding to 14-3-3 adapter proteins and inhibits the recruitment of cytoplasmic CCR4-NOT and PAN2-PAN3 deadenylase complexes to the mRNA decay machinery, thereby inhibiting ZFP36-induced ARE-containing mRNA deadenylation and decay processes. Phosphorylation by MAPKAPK2 does not impair ARE-containing RNA-binding. Phosphorylated in a MAPKAPK2- and p38 MAPK-dependent manner upon skeletal muscle satellite cell activation; this phosphorylation inhibits ZFP36-mediated mRNA decay activity, and hence stabilizes MYOD1 mRNA. Phosphorylated by MAPK1 upon mitogen stimulation. Phosphorylated at Ser-64 and Ser-91; these phosphorylations increase in a SH3KBP1-dependent manner. Phosphorylated at serine and threonine residues in a pyruvate kinase PKM- and p38 MAPK-dependent manner. Phosphorylation at Ser-58 may participate in the PKM-mediated degradation of ZFP36 in a p38 MAPK-dependent manner. Dephosphorylated by serine/threonine phosphatase 2A at Ser-184. Post-translationally, ubiquitinated; pyruvate kinase (PKM)-dependent ubiquitination leads to proteasomal degradation through a p38 MAPK signaling pathway.

It localises to the nucleus. Its subcellular location is the cytoplasm. The protein resides in the cytoplasmic granule. The protein localises to the P-body. Zinc-finger RNA-binding protein that destabilizes numerous cytoplasmic AU-rich element (ARE)-containing mRNA transcripts by promoting their poly(A) tail removal or deadenylation, and hence provide a mechanism for attenuating protein synthesis. Acts as an 3'-untranslated region (UTR) ARE mRNA-binding adapter protein to communicate signaling events to the mRNA decay machinery. Recruits deadenylase CNOT7 (and probably the CCR4-NOT complex) via association with CNOT1, and hence promotes ARE-mediated mRNA deadenylation. Also functions by recruiting components of the cytoplasmic RNA decay machinery to the bound ARE-containing mRNAs. Self regulates by destabilizing its own mRNA. Binds to 3'-UTR ARE of numerous mRNAs. Also binds to ARE of its own mRNA. Plays a role in anti-inflammatory responses; suppresses tumor necrosis factor (TNF)-alpha production by stimulating ARE-mediated TNF-alpha mRNA decay and several other inflammatory ARE-containing mRNAs in interferon (IFN)- and/or lipopolysaccharide (LPS)-induced macrophages. Also plays a role in the regulation of dendritic cell maturation at the post-transcriptional level, and hence operates as part of a negative feedback loop to limit the inflammatory response. Promotes ARE-mediated mRNA decay of hypoxia-inducible factor HIF1A mRNA during the response of endothelial cells to hypoxia. Positively regulates early adipogenesis of preadipocytes by promoting ARE-mediated mRNA decay of immediate early genes (IEGs). Negatively regulates hematopoietic/erythroid cell differentiation by promoting ARE-mediated mRNA decay of the transcription factor STAT5B mRNA. Plays a role in maintaining skeletal muscle satellite cell quiescence by promoting ARE-mediated mRNA decay of the myogenic determination factor MYOD1 mRNA. Also associates with and regulates the expression of non-ARE-containing target mRNAs at the post-transcriptional level, such as MHC class I mRNAs. Participates in association with argonaute RISC catalytic components in the ARE-mediated mRNA decay mechanism; assists microRNA (miRNA) targeting ARE-containing mRNAs. May also play a role in the regulation of cytoplasmic mRNA decapping; enhances decapping of ARE-containing RNAs, in vitro. Involved in the delivery of target ARE-mRNAs to processing bodies (PBs). In addition to its cytosolic mRNA-decay function, affects nuclear pre-mRNA processing. Negatively regulates nuclear poly(A)-binding protein PABPN1-stimulated polyadenylation activity on ARE-containing pre-mRNA during LPS-stimulated macrophages. Also involved in the regulation of stress granule (SG) and P-body (PB) formation and fusion. Plays a role in the regulation of keratinocyte proliferation, differentiation and apoptosis. Plays a role as a tumor suppressor by inhibiting cell proliferation in breast cancer cells. The polypeptide is mRNA decay activator protein ZFP36 (Bos taurus (Bovine)).